The chain runs to 282 residues: Bis(5'-nucleosyl)-tetraphosphatase, symmetrical (282 aa).

This sequence belongs to the Ap4A hydrolase family.

It catalyses the reaction P(1),P(4)-bis(5'-adenosyl) tetraphosphate + H2O = 2 ADP + 2 H(+). Functionally, hydrolyzes diadenosine 5',5'''-P1,P4-tetraphosphate to yield ADP. The sequence is that of Bis(5'-nucleosyl)-tetraphosphatase, symmetrical from Salmonella paratyphi C (strain RKS4594).